Here is a 1509-residue protein sequence, read N- to C-terminus: DNA-directed RNA polymerase subunit beta' (1509 aa).

Residues C75, C77, C90, and C93 each contribute to the Zn(2+) site. D474, D476, and D478 together coordinate Mg(2+). The Zn(2+) site is built by C804, C878, C885, and C888.

This sequence belongs to the RNA polymerase beta' chain family. As to quaternary structure, the RNAP catalytic core consists of 2 alpha, 1 beta, 1 beta' and 1 omega subunit. When a sigma factor is associated with the core the holoenzyme is formed, which can initiate transcription. Mg(2+) is required as a cofactor. It depends on Zn(2+) as a cofactor.

It catalyses the reaction RNA(n) + a ribonucleoside 5'-triphosphate = RNA(n+1) + diphosphate. Its function is as follows. DNA-dependent RNA polymerase catalyzes the transcription of DNA into RNA using the four ribonucleoside triphosphates as substrates. This chain is DNA-directed RNA polymerase subunit beta', found in Sulfurovum sp. (strain NBC37-1).